Here is a 386-residue protein sequence, read N- to C-terminus: Succinate--CoA ligase [ADP-forming] subunit beta (386 aa).

An ATP-grasp domain is found at 9-244 (KDLLTSYAIP…PSQENVRDVL (236 aa)). ATP is bound by residues Lys-46, 53–55 (GRG), Val-102, and Glu-107. Mg(2+) is bound by residues Asn-199 and Asp-213. Substrate contacts are provided by residues Asn-264 and 321 to 323 (GIM).

Belongs to the succinate/malate CoA ligase beta subunit family. In terms of assembly, heterotetramer of two alpha and two beta subunits. It depends on Mg(2+) as a cofactor.

It carries out the reaction succinate + ATP + CoA = succinyl-CoA + ADP + phosphate. It catalyses the reaction GTP + succinate + CoA = succinyl-CoA + GDP + phosphate. The protein operates within carbohydrate metabolism; tricarboxylic acid cycle; succinate from succinyl-CoA (ligase route): step 1/1. Functionally, succinyl-CoA synthetase functions in the citric acid cycle (TCA), coupling the hydrolysis of succinyl-CoA to the synthesis of either ATP or GTP and thus represents the only step of substrate-level phosphorylation in the TCA. The beta subunit provides nucleotide specificity of the enzyme and binds the substrate succinate, while the binding sites for coenzyme A and phosphate are found in the alpha subunit. This chain is Succinate--CoA ligase [ADP-forming] subunit beta, found in Chlamydia abortus (strain DSM 27085 / S26/3) (Chlamydophila abortus).